A 632-amino-acid polypeptide reads, in one-letter code: Chaperone protein HtpG (632 aa).

The segment at 1-339 (MTQQTMSFQA…SSDLPLNVSR (339 aa)) is a; substrate-binding. The interval 340-559 (EILQESRDVK…DNDMSGYLQR (220 aa)) is b. Positions 560–632 (MLKAAGQNAP…TNALLLSRAA (73 aa)) are c.

The protein belongs to the heat shock protein 90 family. Homodimer.

The protein localises to the cytoplasm. In terms of biological role, molecular chaperone. Has ATPase activity. In Burkholderia thailandensis (strain ATCC 700388 / DSM 13276 / CCUG 48851 / CIP 106301 / E264), this protein is Chaperone protein HtpG.